A 587-amino-acid chain; its full sequence is Proteasome-associated ATPase (587 aa).

Residues 1–94 are a coiled coil; sequence MAARDDAEAR…KEEVDRLAQP (94 aa). Residue 276–281 participates in ATP binding; sequence GCGKTL. Residues 586–587 are docks into pockets in the proteasome alpha-ring; the sequence is YL.

The protein belongs to the AAA ATPase family. Homohexamer. Assembles into a hexameric ring structure that caps the 20S proteasome core. Strongly interacts with the prokaryotic ubiquitin-like protein Pup through a hydrophobic interface; the interacting region of ARC lies in its N-terminal coiled-coil domain. There is one Pup binding site per ARC hexamer ring. Upon ATP-binding, the C-terminus of ARC interacts with the alpha-rings of the proteasome core, possibly by binding to the intersubunit pockets.

It participates in protein degradation; proteasomal Pup-dependent pathway. In terms of biological role, ATPase which is responsible for recognizing, binding, unfolding and translocation of pupylated proteins into the bacterial 20S proteasome core particle. May be essential for opening the gate of the 20S proteasome via an interaction with its C-terminus, thereby allowing substrate entry and access to the site of proteolysis. Thus, the C-termini of the proteasomal ATPase may function like a 'key in a lock' to induce gate opening and therefore regulate proteolysis. The chain is Proteasome-associated ATPase from Streptosporangium roseum (strain ATCC 12428 / DSM 43021 / JCM 3005 / KCTC 9067 / NCIMB 10171 / NRRL 2505 / NI 9100).